An 83-amino-acid chain; its full sequence is Bowman-Birk type proteinase inhibitor C-II (83 aa).

The propeptide occupies 1–7 (MELNLFK). 7 disulfide bridges follow: Cys-21–Cys-75, Cys-22–Cys-37, Cys-25–Cys-71, Cys-27–Cys-35, Cys-45–Cys-52, Cys-49–Cys-64, and Cys-54–Cys-62.

It belongs to the Bowman-Birk serine protease inhibitor family.

In Glycine max (Soybean), this protein is Bowman-Birk type proteinase inhibitor C-II.